Reading from the N-terminus, the 220-residue chain is Vesicle-associated membrane protein 7 (220 aa).

Residue Ala-2 is modified to N-acetylalanine. Over 2–188 (AILFAVVARG…ARAMCMKNLK (187 aa)) the chain is Cytoplasmic. The Longin domain occupies 7–110 (VVARGTTILA…AMNSEFSSVL (104 aa)). In terms of domain architecture, v-SNARE coiled-coil homology spans 125-185 (KVMETQAQVD…RNLARAMCMK (61 aa)). A phosphoserine mark is found at Ser-167 and Ser-168. A helical; Anchor for type IV membrane protein transmembrane segment spans residues 189 to 209 (LTIIIIIVSIVFIYIIVSPLC). Residues 210–220 (GGFTWPSCVKK) lie on the Vesicular side of the membrane.

Belongs to the synaptobrevin family. As to quaternary structure, component of the SNARE complex composed of STX4, SNAP23 and VAMP7 that binds SYT7 during lysosomal exocytosis. Component of the SNARE complex composed of STX7, STX8, VAMP7 and VTI1B that is required for heterotypic fusion of late endosomes with lysosomes in liver cells. May interact with STX17. Interacts with PICALM. Interacts with RAB21.

The protein resides in the cytoplasmic vesicle. The protein localises to the secretory vesicle membrane. It is found in the golgi apparatus. Its subcellular location is the trans-Golgi network membrane. It localises to the late endosome membrane. The protein resides in the lysosome membrane. The protein localises to the endoplasmic reticulum membrane. It is found in the phagosome membrane. Its subcellular location is the synapse. It localises to the synaptosome. In terms of biological role, involved in the targeting and/or fusion of transport vesicles to their target membrane during transport of proteins from the early endosome to the lysosome. Required for heterotypic fusion of late endosomes with lysosomes and homotypic lysosomal fusion. Required for calcium regulated lysosomal exocytosis. Involved in the export of chylomicrons from the endoplasmic reticulum to the cis Golgi. Required for exocytosis of mediators during eosinophil and neutrophil degranulation, and target cell killing by natural killer cells. Required for focal exocytosis of late endocytic vesicles during phagosome formation. This Pongo abelii (Sumatran orangutan) protein is Vesicle-associated membrane protein 7 (VAMP7).